Reading from the N-terminus, the 335-residue chain is Histidinol-phosphate aminotransferase (335 aa).

Residue Lys202 is modified to N6-(pyridoxal phosphate)lysine.

This sequence belongs to the class-II pyridoxal-phosphate-dependent aminotransferase family. Histidinol-phosphate aminotransferase subfamily. As to quaternary structure, homodimer. Pyridoxal 5'-phosphate serves as cofactor.

It catalyses the reaction L-histidinol phosphate + 2-oxoglutarate = 3-(imidazol-4-yl)-2-oxopropyl phosphate + L-glutamate. It participates in amino-acid biosynthesis; L-histidine biosynthesis; L-histidine from 5-phospho-alpha-D-ribose 1-diphosphate: step 7/9. In Thermotoga sp. (strain RQ2), this protein is Histidinol-phosphate aminotransferase.